The primary structure comprises 205 residues: MSLSIPKIENGAAGDLEVSDKVFGQGFNESLVHQLVVGYLAAARSGTKAQKSRSDVSGGGKKPWKQKGSGHARAGTTRSPLWRTGGVTFAASNRNYRQKLNKKMYRAAVRSIFSELLRQGRLVVSDGIVPTSPKTRELAAKLKSFGEGYTVILAEQLDLNLALSSRNLPNVSINTADTLSPVDLVHAERVIATSSAIRKLEVRLS.

Positions Lys-48–Ser-79 are disordered.

This sequence belongs to the universal ribosomal protein uL4 family. As to quaternary structure, part of the 50S ribosomal subunit.

In terms of biological role, one of the primary rRNA binding proteins, this protein initially binds near the 5'-end of the 23S rRNA. It is important during the early stages of 50S assembly. It makes multiple contacts with different domains of the 23S rRNA in the assembled 50S subunit and ribosome. Its function is as follows. Forms part of the polypeptide exit tunnel. This is Large ribosomal subunit protein uL4 from Methylococcus capsulatus (strain ATCC 33009 / NCIMB 11132 / Bath).